The sequence spans 84 residues: DNA-directed RNA polymerase subunit Rpo5 (84 aa).

It belongs to the archaeal Rpo5/eukaryotic RPB5 RNA polymerase subunit family. In terms of assembly, part of the 13-subunit RNA polymerase complex.

It localises to the cytoplasm. It catalyses the reaction RNA(n) + a ribonucleoside 5'-triphosphate = RNA(n+1) + diphosphate. In terms of biological role, DNA-dependent RNA polymerase (RNAP) catalyzes the transcription of DNA into RNA using the four ribonucleoside triphosphates as substrates. In Saccharolobus solfataricus (strain ATCC 35092 / DSM 1617 / JCM 11322 / P2) (Sulfolobus solfataricus), this protein is DNA-directed RNA polymerase subunit Rpo5.